Here is a 448-residue protein sequence, read N- to C-terminus: Rhodopsin (448 aa).

The Extracellular portion of the chain corresponds to 2–33 (GRDLRDNETWWYNPSIVVHPHWREFDQVPDAV). Residue asparagine 8 is glycosylated (N-linked (GlcNAc...) asparagine). A helical transmembrane segment spans residues 34–58 (YYSLGIFIGICGIIGCGGNGIVIYL). The Cytoplasmic portion of the chain corresponds to 59 to 70 (FTKTKSLQTPAN). A helical membrane pass occupies residues 71 to 97 (MFIINLAFSDFTFSLVNGFPLMTISCF). Residues 98–109 (LKKWIFGFAACK) lie on the Extracellular side of the membrane. Cysteine 108 and cysteine 186 are disulfide-bonded. A helical transmembrane segment spans residues 110–131 (VYGFIGGIFGFMSIMTMAMISI). Residues 132–151 (DRYNVIGRPMAASKKMSHRR) are Cytoplasmic-facing. A helical membrane pass occupies residues 152-172 (AFIMIIFVWLWSVLWAIGPIF). At 173 to 199 (GWGAYTLEGVLCNCSFDYISRDSTTRS) the chain is on the extracellular side. Residues 200–224 (NILCMFILGFFGPILIIFFCYFNIV) form a helical membrane-spanning segment. Residues 225–261 (MSVSNHEKEMAAMAKRLNAKELRKAQAGANAEMRLAK) are Cytoplasmic-facing. A helical transmembrane segment spans residues 262–283 (ISIVIVSQFLLSWSPYAVVALL). At 284–293 (AQFGPLEWVT) the chain is on the extracellular side. A helical transmembrane segment spans residues 294–315 (PYAAQLPVMFAKASAIHNPMIY). Lysine 305 carries the post-translational modification N6-(retinylidene)lysine. Residues 316–448 (SVSHPKFREA…QGVDNQAYQA (133 aa)) lie on the Cytoplasmic side of the membrane. S-palmitoyl cysteine attachment occurs at residues cysteine 336 and cysteine 337. Residues 343 to 352 (ETEDDKDAET) are compositionally biased toward acidic residues. The disordered stretch occupies residues 343–448 (ETEDDKDAET…QGVDNQAYQA (106 aa)). The segment covering 359–391 (SSDAAPSADAAQMKEMMAMMQKMQQQQAAYPPQ) has biased composition (low complexity). The span at 392-437 (GYAPPPQGYPPQGYPPQGYPPQGYPPQGYPPPPQGAPPQGAPPAAP) shows a compositional bias: pro residues.

It belongs to the G-protein coupled receptor 1 family. Opsin subfamily. In terms of processing, contains one covalently linked retinal chromophore. Upon light absorption, the covalently bound 11-cis-retinal is converted to all-trans-retinal. After hydrolysis of the Schiff base and release of the covalently bound all-trans-retinal, active rhodopsin is regenerated by binding of a fresh molecule of 11-cis-retinal. As to expression, retina, rhabdomere membrane of photoreceptor cells (at protein level).

It localises to the cell projection. It is found in the rhabdomere membrane. In terms of biological role, photoreceptor required for image-forming vision at low light intensity. Light-induced isomerization of 11-cis to all-trans retinal triggers a conformational change that activates signaling via G-proteins. Signaling mediates the activation of phospholipase C. Subsequent receptor phosphorylation mediates displacement of the bound G-protein alpha subunit by arrestin and terminates signaling. This chain is Rhodopsin (RHO), found in Todarodes pacificus (Japanese flying squid).